The sequence spans 286 residues: Transmembrane protein 156 (286 aa).

Over 1-4 (MTET) the chain is Cytoplasmic. The helical transmembrane segment at 5–25 (AFLKLFVAIVITFILVLPEFF) threads the bilayer. The Extracellular portion of the chain corresponds to 26–214 (KTPKERTLEL…KSVTCSMKIT (189 aa)). N-linked (GlcNAc...) asparagine glycans are attached at residues asparagine 45, asparagine 54, asparagine 76, and asparagine 142. The helical transmembrane segment at 215–235 (WYVLVLFVFMLGIIFIIYKIL) threads the bilayer. Over 236 to 286 (EEHRRVWRRQSHNYKSSSVLFRGHDSGKLSTLNVRVIPGYPWTIWTRDFDE) the chain is Cytoplasmic.

The protein localises to the membrane. The chain is Transmembrane protein 156 (Tmem156) from Rattus norvegicus (Rat).